We begin with the raw amino-acid sequence, 414 residues long: Cytochrome P450 CYP105Q4 (414 aa).

Residues 1–12 (MSDTLASPSPET) are compositionally biased toward polar residues. Residues 1-21 (MSDTLASPSPETASGIPDYPM) form a disordered region. Residues His-108, Gln-302, Arg-304, His-361, and Cys-363 each coordinate heme.

It belongs to the cytochrome P450 family. Heme serves as cofactor.

Functionally, can bind oleic-acid derivatives, amphotericin B like precursors and a variety of nitrogen ligand donors. The sequence is that of Cytochrome P450 CYP105Q4 from Mycobacterium marinum (strain ATCC BAA-535 / M).